A 1024-amino-acid chain; its full sequence is Non-canonical nonribosomal peptide synthetase FrzA (1024 aa).

An adenylation (A) domain region spans residues 29–425; the sequence is RAQKSHQAIA…GRRDHQVKVR (397 aa). In terms of domain architecture, Carrier spans 534–611; the sequence is NASQDVRSAL…ALTSIIKQRL (78 aa). Ser571 is modified (O-(pantetheine 4'-phosphoryl)serine). In terms of domain architecture, Thioester reductase (TE) spans 655 to 898; it reads LTGGTGFVGA…VPVDYVNAAI (244 aa).

This sequence belongs to the NRP synthetase family. Requires pantetheine 4'-phosphate as cofactor.

It catalyses the reaction L-tyrosinal + AMP + diphosphate + NADP(+) = L-tyrosine + ATP + NADPH + H(+). It functions in the pathway secondary metabolite biosynthesis. Functionally, non-canonical nonribosomal peptide synthetase; part of the gene cluster that mediates the biosynthesis of the alkaloid (-)-FR901483, a potent immunosuppressant that shows efficacy in animal models and a probable inhibitor of purine nucleotide biosynthesis by targeting phosphoribosylpyrophosphate amidotransferase (PPAT). Within the pathway, FrzA catalyzes the reduction of L-tyrosine via its C-terminal reductase domain to produce L-tyrosinal. The biosynthesis of (-)-FR901483 starts with the condensation of two L-tyrosines to yield (S,S)-dityrosyl-piperazine. This process occurs in 3 steps with the non-canonical nonribosomal peptide synthetase FrzA catalyzing the reduction of L-tyrosine into L-tyrosinal, the spontaneous condensation of 2 L-tyrosinal units, and the subsequent reduction by the NmrA-like family domain-containing oxidoreductase FrzB. The cytochrome P450 monooxygenase FrzC then performs coupling between N10 and C1' to morph the piperazine into a 1,4-diazabicyclo[3.2.1]octane spiro-fused to a 2,5-cyclohexadienone. The dienone portion is further reduced to cyclohexanone by the flavin-dependent reductase FrzD. The methyltranserases (MTs) FrzE and FrzF are then involved in the methylation at the C10' amine and the C4 phenolic oxygen, respectively. The order of the two MTs appear to be interchangeable. Cleavage of the C9-N10' bond by the dioxygenase FrzG then leads to formation of a conjugated iminium. In addition to the oxidation of C9, an additional dehydrogenation between C7 and C8 can occur to give a likely shunt product. The next biosynthetic step is the intramolecular aldol condensation catalyzed by the newly identified aldolase FrzH to yield an aza-tricyclic product with the formation of a C9-C3' bond. The short-chain dehydrogenase/reductase FrzI then produces dephospho-(-)-FR901483 that is phosphorylated at C4'-OH into (-)-FR901483 by the phosphotransferase FrzJ. This Cladobotryum sp protein is Non-canonical nonribosomal peptide synthetase FrzA.